A 1267-amino-acid chain; its full sequence is Eukaryotic translation initiation factor 3 subunit A (1267 aa).

Residues 82–118 (NIKSLEDVVRAYLKLAEEKTETAKEESQQMVLDIEDL) are a coiled coil. Residues 315–498 (MQRMSTRVLL…RTLSFGSDLN (184 aa)) enclose the PCI domain. Composition is skewed to basic and acidic residues over residues 792–835 (EERK…LEQE), 844–1086 (YQER…DSRP), and 1098–1147 (WRER…EGSA). The segment at 792-1267 (EERKKQRKED…DDDGWTTVRR (476 aa)) is disordered. 3 repeat units span residues 956–965 (DDDRGPRRGG), 966–975 (DDERPPRRGF), and 976–985 (DDDRGTRRGF). The 12 X 10 AA approximate tandem repeats of D-[DE]-[DE]-R-[GP]-[GPQT]-R-R-[GPS]-[ADFGIM] stretch occupies residues 956–1073 (DDDRGPRRGG…DDERGGRRGM (118 aa)). The stretch at 986 to 994 (DDDRGQRRG) is one 4; truncated repeat. Repeat copies occupy residues 995–1004 (DDDRGPRRGM) and 1005–1014 (DDDRGPRRPI). The stretch at 1015–1023 (DDDRGPRRS) is one 7; truncated repeat. 2 tandem repeats follow at residues 1024–1033 (DDDRGPRRGF) and 1034–1043 (DDDRGPRRGM). The stretch at 1044–1053 (DEPRGPRRGA) is one 10; approximate repeat. Copy 11 of the repeat occupies 1054–1063 (DDDWGPRRGG). The 12; approximate repeat unit spans residues 1064–1073 (DDERGGRRGM). The segment covering 1150-1159 (RGGGGGGGGE) has biased composition (gly residues). Positions 1162–1256 (SSWRDSRRED…KENPRRTKNE (95 aa)) are enriched in basic and acidic residues.

The protein belongs to the eIF-3 subunit A family. As to quaternary structure, component of the eukaryotic translation initiation factor 3 (eIF-3) complex, which is composed of 13 subunits: eif3a, eif3b, eif3c, eif3d, eif3e, eif3f, eif3g, eif3h, eif3i, eif3j, eif3k, eif3l and eif3m.

It is found in the cytoplasm. RNA-binding component of the eukaryotic translation initiation factor 3 (eIF-3) complex, which is involved in protein synthesis of a specialized repertoire of mRNAs and, together with other initiation factors, stimulates binding of mRNA and methionyl-tRNAi to the 40S ribosome. The eIF-3 complex specifically targets and initiates translation of a subset of mRNAs involved in cell proliferation. The chain is Eukaryotic translation initiation factor 3 subunit A (eif3a) from Danio rerio (Zebrafish).